We begin with the raw amino-acid sequence, 307 residues long: Protoheme IX farnesyltransferase (307 aa).

A run of 9 helical transmembrane segments spans residues 33-53 (IGIV…AFYF), 62-82 (LHIV…SCSI), 111-131 (RVLW…LMTT), 132-152 (VTAA…YTLW), 159-179 (LNTV…WTAV), 185-205 (IVPL…FLAL), 229-249 (MTKR…FYLF), 251-271 (LGIP…LLGL), and 287-307 (FVYS…ATIW).

It belongs to the UbiA prenyltransferase family. Protoheme IX farnesyltransferase subfamily. As to quaternary structure, interacts with CtaA.

The protein resides in the cell membrane. It carries out the reaction heme b + (2E,6E)-farnesyl diphosphate + H2O = Fe(II)-heme o + diphosphate. Its pathway is porphyrin-containing compound metabolism; heme O biosynthesis; heme O from protoheme: step 1/1. Its function is as follows. Converts heme B (protoheme IX) to heme O by substitution of the vinyl group on carbon 2 of heme B porphyrin ring with a hydroxyethyl farnesyl side group. In Geobacillus thermodenitrificans (strain NG80-2), this protein is Protoheme IX farnesyltransferase.